We begin with the raw amino-acid sequence, 91 residues long: UPF0250 protein BP0104 (91 aa).

It belongs to the UPF0250 family.

This is UPF0250 protein BP0104 from Bordetella pertussis (strain Tohama I / ATCC BAA-589 / NCTC 13251).